The following is a 336-amino-acid chain: Tetraacyldisaccharide 4'-kinase (336 aa).

60–67 contacts ATP; it reads TVGGTGKT.

Belongs to the LpxK family.

It carries out the reaction a lipid A disaccharide + ATP = a lipid IVA + ADP + H(+). Its pathway is glycolipid biosynthesis; lipid IV(A) biosynthesis; lipid IV(A) from (3R)-3-hydroxytetradecanoyl-[acyl-carrier-protein] and UDP-N-acetyl-alpha-D-glucosamine: step 6/6. Functionally, transfers the gamma-phosphate of ATP to the 4'-position of a tetraacyldisaccharide 1-phosphate intermediate (termed DS-1-P) to form tetraacyldisaccharide 1,4'-bis-phosphate (lipid IVA). This Pseudomonas fluorescens (strain ATCC BAA-477 / NRRL B-23932 / Pf-5) protein is Tetraacyldisaccharide 4'-kinase.